We begin with the raw amino-acid sequence, 381 residues long: uncharacterized protein (381 aa).

This sequence belongs to the glycerate kinase type-1 family.

This is an uncharacterized protein from Mycobacterium tuberculosis (strain CDC 1551 / Oshkosh).